A 482-amino-acid chain; its full sequence is tRNA sulfurtransferase (482 aa).

The 105-residue stretch at 61 to 165 (LTIRDALTRI…DDRLLLIKGR (105 aa)) folds into the THUMP domain. ATP is bound by residues 183–184 (LI), K265, G287, and Q296. Residues C344 and C456 are joined by a disulfide bond. Positions 404–482 (FGPNDVILDI…GFKNVKVYRP (79 aa)) constitute a Rhodanese domain. The Cysteine persulfide intermediate role is filled by C456.

This sequence belongs to the ThiI family. Interacts with IscS.

The protein localises to the cytoplasm. The enzyme catalyses [ThiI sulfur-carrier protein]-S-sulfanyl-L-cysteine + a uridine in tRNA + 2 reduced [2Fe-2S]-[ferredoxin] + ATP + H(+) = [ThiI sulfur-carrier protein]-L-cysteine + a 4-thiouridine in tRNA + 2 oxidized [2Fe-2S]-[ferredoxin] + AMP + diphosphate. It catalyses the reaction [ThiS sulfur-carrier protein]-C-terminal Gly-Gly-AMP + S-sulfanyl-L-cysteinyl-[cysteine desulfurase] + AH2 = [ThiS sulfur-carrier protein]-C-terminal-Gly-aminoethanethioate + L-cysteinyl-[cysteine desulfurase] + A + AMP + 2 H(+). The protein operates within cofactor biosynthesis; thiamine diphosphate biosynthesis. Functionally, catalyzes the ATP-dependent transfer of a sulfur to tRNA to produce 4-thiouridine in position 8 of tRNAs, which functions as a near-UV photosensor. Also catalyzes the transfer of sulfur to the sulfur carrier protein ThiS, forming ThiS-thiocarboxylate. This is a step in the synthesis of thiazole, in the thiamine biosynthesis pathway. The sulfur is donated as persulfide by IscS. The sequence is that of tRNA sulfurtransferase from Escherichia coli O157:H7.